A 202-amino-acid polypeptide reads, in one-letter code: tRNA (pseudouridine(54)-N(1))-methyltransferase (202 aa).

The S-adenosyl-L-methionine site is built by L134 and G155.

It belongs to the methyltransferase superfamily. TrmY family. In terms of assembly, homodimer.

Its subcellular location is the cytoplasm. The catalysed reaction is pseudouridine(54) in tRNA + S-adenosyl-L-methionine = N(1)-methylpseudouridine(54) in tRNA + S-adenosyl-L-homocysteine + H(+). In terms of biological role, specifically catalyzes the N1-methylation of pseudouridine at position 54 (Psi54) in tRNAs. The polypeptide is tRNA (pseudouridine(54)-N(1))-methyltransferase (Thermococcus gammatolerans (strain DSM 15229 / JCM 11827 / EJ3)).